The primary structure comprises 105 residues: Putative RNA-binding protein RbpF (105 aa).

Residues 2–79 (SIYVGNLSYE…RDLKVNKAKP (78 aa)) enclose the RRM domain. Over residues 75 to 84 (NKAKPKEDRG) the composition is skewed to basic and acidic residues. Positions 75–105 (NKAKPKEDRGSFGGGNRGGYGGGGGGGRSRY) are disordered. Gly residues predominate over residues 85–105 (SFGGGNRGGYGGGGGGGRSRY).

The polypeptide is Putative RNA-binding protein RbpF (rbpF) (Nostoc sp. (strain PCC 7120 / SAG 25.82 / UTEX 2576)).